The following is a 576-amino-acid chain: 9-cis-epoxycarotenoid dioxygenase NCED2, chloroplastic (576 aa).

The transit peptide at 1-34 directs the protein to the chloroplast; sequence MEVPIAAMTFAHPANVMTLASRQPKSKRSHISPA. His270, His319, His385, and His563 together coordinate Fe cation.

The protein belongs to the carotenoid oxygenase family. Fe(2+) serves as cofactor.

It is found in the plastid. The protein localises to the chloroplast. The catalysed reaction is a 9-cis-epoxycarotenoid + O2 = a 12'-apo-carotenal + 2-cis,4-trans-xanthoxin. It carries out the reaction 9-cis-violaxanthin + O2 = (3S,5R,6S)-5,6-epoxy-3-hydroxy-5,6-dihydro-12'-apo-beta-caroten-12'-al + 2-cis,4-trans-xanthoxin. The enzyme catalyses 9'-cis-neoxanthin + O2 = (3S,5R,6R)-3,5-dihydroxy-6,7-didehydro-5,6-dihydro-12'-apo-beta-caroten-12'-al + 2-cis,4-trans-xanthoxin. In terms of biological role, has a 11,12(11',12') 9-cis epoxycarotenoid cleavage activity. Catalyzes the first step of abscisic-acid biosynthesis from carotenoids. The polypeptide is 9-cis-epoxycarotenoid dioxygenase NCED2, chloroplastic (Oryza sativa subsp. japonica (Rice)).